Reading from the N-terminus, the 129-residue chain is Methylmalonyl-CoA decarboxylase subunit gamma (129 aa).

2 stretches are compositionally biased toward low complexity: residues 24 to 39 (APAA…APAP) and 49 to 58 (PAAAAAPVPA). The tract at residues 24–58 (APAAAPKAAPAAAPAPKAAPAPAPAPAAAAAPVPA) is disordered. The Biotinyl-binding domain maps to 51-129 (AAAAPVPAGA…STGDDMVVLG (79 aa)). Lysine 95 is modified (N6-biotinyllysine).

As to quaternary structure, the methylmalonyl-CoA decarboxylase is composed of five subunits: the carboxyltransferase alpha subunit (MmdA), the tunnel beta subunit (MmdB), the biotin-containing gamma subunit (MmdC), and the delta (MmdD) and epsilon (MmdE) subunits. Biotin is required as a cofactor.

Its subcellular location is the cell membrane. The enzyme catalyses (S)-methylmalonyl-CoA + Na(+)(in) + H(+)(out) = propanoyl-CoA + Na(+)(out) + CO2. Its activity is regulated as follows. Completely inhibited by avidin. Biotin-containing subunit of the sodium ion pump methylmalonyl-CoA decarboxylase, which converts the chemical energy of a decarboxylation reaction into an electrochemical gradient of Na(+) ions across the cytoplasmic membrane, thereby creating a sodium ion motive force that is used for ATP synthesis. Can also convert malonyl-CoA into acetyl-CoA. This chain is Methylmalonyl-CoA decarboxylase subunit gamma, found in Veillonella parvula (Staphylococcus parvulus).